A 571-amino-acid chain; its full sequence is Potassium-transporting ATPase potassium-binding subunit (571 aa).

The next 11 membrane-spanning stretches (helical) occupy residues 5 to 25, 64 to 84, 136 to 156, 179 to 199, 254 to 274, 285 to 305, 330 to 350, 357 to 376, 421 to 441, 488 to 508, and 527 to 547; these read GWIQ…PLGS, LAYT…LYAI, GLTH…VALI, LYVL…QGIP, LSNL…TNVF, WAIL…TYWA, FGIA…CGAV, FTAL…EIII, MLGI…ATVV, LAIG…AIAG, and GGLF…LTFF.

This sequence belongs to the KdpA family. In terms of assembly, the system is composed of three essential subunits: KdpA, KdpB and KdpC.

Its subcellular location is the cell inner membrane. Part of the high-affinity ATP-driven potassium transport (or Kdp) system, which catalyzes the hydrolysis of ATP coupled with the electrogenic transport of potassium into the cytoplasm. This subunit binds the periplasmic potassium ions and delivers the ions to the membrane domain of KdpB through an intramembrane tunnel. This chain is Potassium-transporting ATPase potassium-binding subunit, found in Methylobacterium radiotolerans (strain ATCC 27329 / DSM 1819 / JCM 2831 / NBRC 15690 / NCIMB 10815 / 0-1).